The primary structure comprises 578 residues: CTP synthase 2 (578 aa).

The region spanning 300–553 (SIALVGKYTK…MLAASGKLNT (254 aa)) is the Glutamine amidotransferase type-1 domain. Active-site for GATase activity residues include cysteine 399, histidine 526, and glutamate 528.

It belongs to the CTP synthase family.

It catalyses the reaction UTP + L-glutamine + ATP + H2O = CTP + L-glutamate + ADP + phosphate + 2 H(+). The protein operates within pyrimidine metabolism; CTP biosynthesis via de novo pathway; CTP from UDP: step 2/2. Its function is as follows. Catalyzes the ATP-dependent amination of UTP to CTP with either L-glutamine or ammonia as the source of nitrogen. Constitutes the rate-limiting enzyme in the synthesis of cytosine nucleotides. The polypeptide is CTP synthase 2 (ctps2) (Xenopus laevis (African clawed frog)).